The sequence spans 489 residues: EGF-like domain-containing protein 2 (489 aa).

The first 23 residues, 1–23 (MMQTLLRGLCVVVLFWGYIKASA), serve as a signal peptide directing secretion. In terms of domain architecture, EGF-like spans 73-109 (PATLCDPPCLNGGQCFEPTADTYMCMCSEAFYGSQCE). Cystine bridges form between Cys77–Cys87, Cys81–Cys97, and Cys99–Cys108. The ZP domain maps to 116 to 370 (ECSGDQITIN…GSCPTPAPPA (255 aa)). Asn229 is a glycosylation site (N-linked (GlcNAc...) asparagine). Disordered regions lie at residues 358–389 (CEPGSCPTPAPPAPVQPTPSENPGRKRRAASD) and 404–425 (RSNEKLRLPHNKSDKKSQQNAD). Residues 363–374 (CPTPAPPAPVQP) show a composition bias toward pro residues. The segment covering 404 to 420 (RSNEKLRLPHNKSDKKS) has biased composition (basic and acidic residues). N-linked (GlcNAc...) asparagine glycans are attached at residues Asn414 and Asn479.

As to expression, component of the acid-insoluble organic matrix of calcified layers of the shell (at protein level).

The protein resides in the secreted. The sequence is that of EGF-like domain-containing protein 2 from Lottia gigantea (Giant owl limpet).